We begin with the raw amino-acid sequence, 717 residues long: Probable metal-nicotianamine transporter YSL12 (717 aa).

Residues 1–56 form a disordered region; sequence MASHANASGGGGDEEMVEASTLRHRHGAGKDANGVGTERQLAAAAAEGEEEGPSSV. 14 helical membrane-spanning segments follow: residues 76-96, 99-119, 144-164, 186-206, 248-268, 306-326, 351-371, 422-442, 450-470, 482-502, 536-556, 593-613, 636-656, and 671-691; these read AFVV…KLNL, GIIP…VRLW, CVVA…LFGM, IGWM…ALVP, LGKF…YTAG, IVNV…WPLI, VFIS…KVLI, VAFG…PQIF, ILVA…GAGL, LAIF…LVGL, FVSQ…VFWL, LPKH…AINL, FYIG…LFVW, and VASG…ILAL.

The protein belongs to the YSL (TC 2.A.67.2) family. As to expression, expressed in root cortex and stele.

Its subcellular location is the membrane. May be involved in the transport of nicotianamine-chelated metals. This chain is Probable metal-nicotianamine transporter YSL12 (YSL12), found in Oryza sativa subsp. japonica (Rice).